The primary structure comprises 65 residues: MRCLPVFIILLLLASTAAVDVAGSKLKRRLERKPYQGSQAYVKKTAFGLRKCCKRHHGCHPCGRK.

An N-terminal signal peptide occupies residues 1-18; sequence MRCLPVFIILLLLASTAA. Residues 19 to 49 constitute a propeptide that is removed on maturation; that stretch reads VDVAGSKLKRRLERKPYQGSQAYVKKTAFGL. Cystine bridges form between Cys-52–Cys-62 and Cys-53–Cys-59. Residue Pro-61 is modified to 4-hydroxyproline. Cys-62 bears the Cysteine amide mark.

Belongs to the conotoxin T superfamily. As to expression, expressed by the venom duct.

Its subcellular location is the secreted. Its function is as follows. Probable neurotoxin with unknown target. Possibly targets ion channels. This Californiconus californicus (California cone) protein is Conotoxin Cal1.3.